The sequence spans 469 residues: Neuraminidase (469 aa).

Residues 1–6 (MNPNQK) lie on the Intravirion side of the membrane. A helical membrane pass occupies residues 7-27 (IITIGSICMVVGIISLILQIG). The interval 11-33 (GSICMVVGIISLILQIGNIVSIW) is involved in apical transport and lipid raft association. Topologically, residues 28-469 (NIVSIWISHS…DAELPLNIDK (442 aa)) are virion surface. A hypervariable stalk region region spans residues 36–90 (HSIQTGNQNHTGTCDQSIITYKNSTWVNQTYVNISNTNVVAGKDTTSVILAGNSS). N-linked (GlcNAc...) asparagine; by host glycosylation is found at asparagine 44, asparagine 58, asparagine 63, asparagine 68, and asparagine 88. The tract at residues 91-469 (LCPIRGWAIY…DAELPLNIDK (379 aa)) is head of neuraminidase. Cystine bridges form between cysteine 92/cysteine 417, cysteine 124/cysteine 129, cysteine 184/cysteine 231, cysteine 233/cysteine 238, cysteine 279/cysteine 292, cysteine 281/cysteine 290, cysteine 318/cysteine 335, and cysteine 421/cysteine 446. Arginine 118 lines the substrate pocket. Asparagine 146 is a glycosylation site (N-linked (GlcNAc...) asparagine; by host). Aspartate 151 acts as the Proton donor/acceptor in catalysis. Residue arginine 152 coordinates substrate. N-linked (GlcNAc...) asparagine; by host glycosylation occurs at asparagine 235. 277–278 (EE) contacts substrate. Arginine 293 is a substrate binding site. Ca(2+) is bound by residues aspartate 294, glycine 298, and aspartate 324. The N-linked (GlcNAc...) asparagine; by host glycan is linked to asparagine 365. Arginine 368 contacts substrate. Tyrosine 402 (nucleophile) is an active-site residue.

This sequence belongs to the glycosyl hydrolase 34 family. Homotetramer. Ca(2+) serves as cofactor. In terms of processing, N-glycosylated.

It is found in the virion membrane. The protein localises to the host apical cell membrane. The catalysed reaction is Hydrolysis of alpha-(2-&gt;3)-, alpha-(2-&gt;6)-, alpha-(2-&gt;8)- glycosidic linkages of terminal sialic acid residues in oligosaccharides, glycoproteins, glycolipids, colominic acid and synthetic substrates.. Inhibited by the neuraminidase inhibitors zanamivir (Relenza) and oseltamivir (Tamiflu). These drugs interfere with the release of progeny virus from infected cells and are effective against all influenza strains. Resistance to neuraminidase inhibitors is quite rare. Its function is as follows. Catalyzes the removal of terminal sialic acid residues from viral and cellular glycoconjugates. Cleaves off the terminal sialic acids on the glycosylated HA during virus budding to facilitate virus release. Additionally helps virus spread through the circulation by further removing sialic acids from the cell surface. These cleavages prevent self-aggregation and ensure the efficient spread of the progeny virus from cell to cell. Otherwise, infection would be limited to one round of replication. Described as a receptor-destroying enzyme because it cleaves a terminal sialic acid from the cellular receptors. May facilitate viral invasion of the upper airways by cleaving the sialic acid moieties on the mucin of the airway epithelial cells. Likely to plays a role in the budding process through its association with lipid rafts during intracellular transport. May additionally display a raft-association independent effect on budding. Plays a role in the determination of host range restriction on replication and virulence. Sialidase activity in late endosome/lysosome traffic seems to enhance virus replication. This is Neuraminidase from Influenza A virus (strain A/Fort Monmouth/1/1947 H1N1).